A 234-amino-acid chain; its full sequence is L-cystine transport system permease protein TcyB (234 aa).

A run of 5 helical transmembrane segments spans residues 8–28 (ALTL…WPIL), 36–56 (IPLT…TALA), 78–98 (TPLL…NVTL), 100–120 (PFPS…SEII), and 199–219 (ILVI…LLSL). The region spanning 32 to 221 (IYYTIPLTIL…IICFLLSLVQ (190 aa)) is the ABC transmembrane type-1 domain.

The protein belongs to the binding-protein-dependent transport system permease family. As to quaternary structure, the complex is composed of two ATP-binding proteins (TcyC), two transmembrane proteins (TcyB) and a solute-binding protein (TcyA).

The protein resides in the cell membrane. Functionally, part of the ABC transporter complex TcyABC involved in L-cystine import. Probably responsible for the translocation of the substrate across the membrane. This is L-cystine transport system permease protein TcyB (tcyB) from Bacillus subtilis (strain 168).